Reading from the N-terminus, the 555-residue chain is Protein FAM234A (555 aa).

Residues methionine 1 to glutamine 22 show a composition bias toward basic and acidic residues. Residues methionine 1 to valine 40 are disordered. The Cytoplasmic portion of the chain corresponds to methionine 1–threonine 49. Position 21 is a phosphoserine (serine 21). A helical; Signal-anchor for type II membrane protein membrane pass occupies residues valine 50–isoleucine 70. Residues proline 71–methionine 555 are Extracellular-facing. Asparagine 116, asparagine 120, asparagine 317, asparagine 392, and asparagine 476 each carry an N-linked (GlcNAc...) asparagine glycan.

Belongs to the FAM234 family.

The protein localises to the membrane. The protein is Protein FAM234A of Mus musculus (Mouse).